The primary structure comprises 626 residues: UvrABC system protein C (626 aa).

The region spanning 20–97 is the GIY-YIG domain; it reads ECSGVYKMLD…IKKFQPKFNI (78 aa). Positions 207-242 constitute a UVR domain; sequence RELQENLSKKMQELSSQMRFEEAAEIRDRIKALSYV.

Belongs to the UvrC family. In terms of assembly, interacts with UvrB in an incision complex.

It localises to the cytoplasm. In terms of biological role, the UvrABC repair system catalyzes the recognition and processing of DNA lesions. UvrC both incises the 5' and 3' sides of the lesion. The N-terminal half is responsible for the 3' incision and the C-terminal half is responsible for the 5' incision. This is UvrABC system protein C from Rickettsia typhi (strain ATCC VR-144 / Wilmington).